The sequence spans 318 residues: Methionyl-tRNA formyltransferase (318 aa).

Position 115-118 (115-118 (SLLP)) interacts with (6S)-5,6,7,8-tetrahydrofolate.

It belongs to the Fmt family.

The catalysed reaction is L-methionyl-tRNA(fMet) + (6R)-10-formyltetrahydrofolate = N-formyl-L-methionyl-tRNA(fMet) + (6S)-5,6,7,8-tetrahydrofolate + H(+). Its function is as follows. Attaches a formyl group to the free amino group of methionyl-tRNA(fMet). The formyl group appears to play a dual role in the initiator identity of N-formylmethionyl-tRNA by promoting its recognition by IF2 and preventing the misappropriation of this tRNA by the elongation apparatus. This is Methionyl-tRNA formyltransferase from Deinococcus radiodurans (strain ATCC 13939 / DSM 20539 / JCM 16871 / CCUG 27074 / LMG 4051 / NBRC 15346 / NCIMB 9279 / VKM B-1422 / R1).